We begin with the raw amino-acid sequence, 326 residues long: N-acetyl-gamma-glutamyl-phosphate reductase (326 aa).

Residue Cys155 is part of the active site.

The protein belongs to the NAGSA dehydrogenase family. Type 1 subfamily.

The protein localises to the cytoplasm. The catalysed reaction is N-acetyl-L-glutamate 5-semialdehyde + phosphate + NADP(+) = N-acetyl-L-glutamyl 5-phosphate + NADPH + H(+). Its pathway is amino-acid biosynthesis; L-arginine biosynthesis; N(2)-acetyl-L-ornithine from L-glutamate: step 3/4. Its function is as follows. Catalyzes the NADPH-dependent reduction of N-acetyl-5-glutamyl phosphate to yield N-acetyl-L-glutamate 5-semialdehyde. The chain is N-acetyl-gamma-glutamyl-phosphate reductase from Shewanella oneidensis (strain ATCC 700550 / JCM 31522 / CIP 106686 / LMG 19005 / NCIMB 14063 / MR-1).